We begin with the raw amino-acid sequence, 125 residues long: Cytochrome c' (125 aa).

Residues arginine 10, glutamate 67, cysteine 116, cysteine 119, and histidine 120 each coordinate heme c.

As to quaternary structure, homodimer. Post-translationally, binds 1 heme c group covalently per subunit.

Cytochrome c' is the most widely occurring bacterial c-type cytochrome. Cytochromes c' are high-spin proteins and the heme has no sixth ligand. Their exact function is not known. This is Cytochrome c' from Pararhodospirillum photometricum (Rhodospirillum photometricum).